A 331-amino-acid chain; its full sequence is Flotillin-like protein FloA (331 aa).

Helical transmembrane passes span 6–26 and 28–48; these read LMILAIVAVAIIVLAVFFTFV and VMLWISALAAGVKISIFTLVG. The interval 236 to 331 is required for correct localization; sequence QTDQAEADKN…KDPSDEDRKS (96 aa). Short sequence motifs (EA repeat) lie at residues 240-242, 251-253, 278-282, and 288-290; these read AEA, AEE, and EAEAE. Positions 312-331 are disordered; the sequence is EMRDSFGKLTKDPSDEDRKS.

Belongs to the flotillin-like FloA family. In terms of assembly, homooligomerizes. Interacts with FloT. Interacts with FtsH midcell. Interacts with PhoR, colocalizes with PhoR in FloA-only membrane rafts.

It is found in the cell membrane. The protein resides in the membrane raft. In terms of biological role, found in functional membrane microdomains (FMM) that may be equivalent to eukaryotic membrane rafts. FMMs are highly dynamic and increase in number as cells age. FloA and FloT function is partially redundant; double deletions have marked synthetic phenotypes. Flotillins are thought to be important factors in membrane fluidity, especially during periods of rapid growth in rich media. Whether specific proteins are associated with FMMs is controversial; in one study FloT rafts have been shown to include proteins involved in adaptation to stationary phase, while FloA-FloT rafts include proteins involved in differentiation including sporulation, biofilm formation and DNA uptake competence. Another (more finely resolved) study only showed association of NfeD2 with FloT rafts of all the proteins examined. Involved in spatial organization of membranes, perhaps recruiting proteins to specific membrane regions. Simultaneous overexpression of both FloA and FloT leads to defects in cell division and differentiation, in part caused by stabilization of FtsH and its subsequent increased ability to degrade proteins. Cells make more biofilm, are about half as long, have less EzrA and more frequent Z-rings. In Bacillus subtilis (strain 168), this protein is Flotillin-like protein FloA.